We begin with the raw amino-acid sequence, 649 residues long: MADDSGTENEGSGCTGWFMVEAIVQHPTGTQISDDEDEEVEDSGYDMVDFIDDSNITHNSLEAQALFNRQEADTHYATVQDLKRKYLGSPYVSPINTIAEAVESEISPRLDAIKLTRQPKKVKRRLFQTRELTDSGYGYSEVEAGTGTQVEKHGVPENGGDGQEKDTGRDIEGEEHTEAEAPTNSVREHAGTAGILELLKCKDLRAALLGKFKECFGLSFIDLIRPFKSDKTTCADWVVAGFGIHHSISEAFQKLIEPLSLYAHIQWLTNAWGMVLLVLVRFKVNKSRSTVARTLATLLNIPDNQMLIEPPKIQSGVAALYWFRTGISNASTVIGEAPEWITRQTVIEHGLADSQFKLTEMVQWAYDNDICEESEIAFEYAQRGDFDSNARAFLNSNMQAKYVKDCATMCRHYKHAEMRKMSIKQWIKHRGSKIEGTGNWKPIVQFLRHQNIEFIPFLSKFKLWLHGTPKKNCIAIVGPPDTGKSYFCMSLISFLGGTVISHVNSSSHFWLQPLVDAKVALLDDATQPCWIYMDTYMRNLLDGNPMSIDRKHKALTLIKCPPLLVTSNIDITKEEKYKYLHTRVTTFTFPNPFPFDRNGNAVYELSNANWKCFFERLSSSLDIQDSEDEEDGSNSQAFRCVPGTVVRTL.

Residues 83–85 (KRK) carry the Nuclear localization signal motif. Phosphoserine; by host occurs at positions 89, 93, and 107. Positions 106 to 115 (ISPRLDAIKL) match the Nuclear export signal motif. A disordered region spans residues 138-169 (GYSEVEAGTGTQVEKHGVPENGGDGQEKDTGR). The tract at residues 187–353 (REHAGTAGIL…QTVIEHGLAD (167 aa)) is DNA-binding region. Positions 452 to 602 (IEFIPFLSKF…FPFDRNGNAV (151 aa)) constitute an SF3 helicase domain. 478 to 485 (GPPDTGKS) contacts ATP. K559 is covalently cross-linked (Glycyl lysine isopeptide (Lys-Gly) (interchain with G-Cter in SUMO)).

It belongs to the papillomaviridae E1 protein family. In terms of assembly, can form hexamers. Interacts with E2 protein; this interaction increases E1 DNA binding specificity. Interacts with host DNA polymerase subunit POLA2. Interacts with host single stranded DNA-binding protein RPA1. Interacts with host TOP1; this interaction stimulates the enzymatic activity of TOP1. Post-translationally, phosphorylated. In terms of processing, sumoylated.

The protein localises to the host nucleus. The catalysed reaction is Couples ATP hydrolysis with the unwinding of duplex DNA by translocating in the 3'-5' direction.. It catalyses the reaction ATP + H2O = ADP + phosphate + H(+). In terms of biological role, ATP-dependent DNA 3'-5' helicase required for initiation of viral DNA replication. It forms a complex with the viral E2 protein. The E1-E2 complex binds to the replication origin which contains binding sites for both proteins. During the initial step, a dimer of E1 interacts with a dimer of protein E2 leading to a complex that binds the viral origin of replication with high specificity. Then, a second dimer of E1 displaces the E2 dimer in an ATP-dependent manner to form the E1 tetramer. Following this, two E1 monomers are added to each half of the site, which results in the formation of two E1 trimers on the viral ori. Subsequently, two hexamers will be created. The double hexamer acts as a bi-directional helicase machinery and unwinds the viral DNA and then recruits the host DNA polymerase to start replication. The sequence is that of Replication protein E1 from Homo sapiens (Human).